Consider the following 224-residue polypeptide: Metalloproteinase inhibitor 4 (224 aa).

A signal peptide spans 1–29; it reads MPWSPLAALSWALVLRLLALLWPPGRGEA. A Zn(2+)-binding site is contributed by Cys30. Involved in metalloproteinase-binding regions lie at residues 30–33 and 99–100; these read CSCA and SS. Disulfide bonds link Cys30–Cys102, Cys32–Cys131, Cys42–Cys156, Cys158–Cys205, Cys163–Cys168, and Cys176–Cys197. The 127-residue stretch at 30-156 folds into the NTR domain; the sequence is CSCAPAHPQQ…SLNHHYHQNC (127 aa).

This sequence belongs to the protease inhibitor I35 (TIMP) family. In terms of tissue distribution, expressed in brain, heart, ovary and skeletal muscle.

The protein resides in the secreted. In terms of biological role, complexes with metalloproteinases (such as collagenases) and irreversibly inactivates them by binding to their catalytic zinc cofactor. The polypeptide is Metalloproteinase inhibitor 4 (Timp4) (Mus musculus (Mouse)).